Here is an 855-residue protein sequence, read N- to C-terminus: Pentatricopeptide repeat-containing protein At1g74750 (855 aa).

The segment at 21 to 40 is disordered; sequence GSRPSAADGNSCTCAEDESG. PPR repeat units follow at residues 358-392, 393-427, 428-462, 463-497, 498-532, 533-567, 568-602, and 603-637; these read DGHT…GCKP, NTVT…GCEP, DRVT…GLSP, DTFT…GCTP, NLVT…GFQP, DKVT…NWVP, DEPV…GLRP, and NVPT…GLHP. A Smr domain is found at 755–838; the sequence is INLHVMSEGT…NSGCFVGSGE (84 aa).

The protein belongs to the PPR family. P subfamily.

In Arabidopsis thaliana (Mouse-ear cress), this protein is Pentatricopeptide repeat-containing protein At1g74750.